The chain runs to 377 residues: Protein RecA (377 aa).

Position 66–73 (66–73 (GPESSGKT)) interacts with ATP. The tract at residues 329–377 (VGVRPEEPTAEPGADAAVTSAAAATDDTAKTVSAPAAKTTKSKAAAAKS) is disordered. Over residues 342–377 (ADAAVTSAAAATDDTAKTVSAPAAKTTKSKAAAAKS) the composition is skewed to low complexity.

This sequence belongs to the RecA family.

It is found in the cytoplasm. In terms of biological role, can catalyze the hydrolysis of ATP in the presence of single-stranded DNA, the ATP-dependent uptake of single-stranded DNA by duplex DNA, and the ATP-dependent hybridization of homologous single-stranded DNAs. It interacts with LexA causing its activation and leading to its autocatalytic cleavage. In Streptomyces avermitilis (strain ATCC 31267 / DSM 46492 / JCM 5070 / NBRC 14893 / NCIMB 12804 / NRRL 8165 / MA-4680), this protein is Protein RecA.